A 403-amino-acid chain; its full sequence is F-box/LRR-repeat protein At1g06630 (403 aa).

Positions 11–59 (RDAINWLPDEILGKILSLLATKQAVSTSVLSKKWRTLFKLVDTLEFDDS) constitute an F-box domain. LRR repeat units follow at residues 239-262 (LPNLEYLDYSDYALYGYPQVNLES) and 288-312 (IRNVEILSLSPDSVGVIYSCCKYGL).

The protein is F-box/LRR-repeat protein At1g06630 of Arabidopsis thaliana (Mouse-ear cress).